The following is a 134-amino-acid chain: ATP synthase epsilon chain (134 aa).

Belongs to the ATPase epsilon chain family. F-type ATPases have 2 components, CF(1) - the catalytic core - and CF(0) - the membrane proton channel. CF(1) has five subunits: alpha(3), beta(3), gamma(1), delta(1), epsilon(1). CF(0) has three main subunits: a, b and c.

The protein resides in the cellular thylakoid membrane. Its function is as follows. Produces ATP from ADP in the presence of a proton gradient across the membrane. This is ATP synthase epsilon chain from Prochlorococcus marinus (strain MIT 9312).